The following is a 300-amino-acid chain: D-alanine--D-alanine ligase (300 aa).

An ATP-grasp domain is found at 99-293 (KKILKYANIN…FAELLNSIVK (195 aa)). 126-181 (IEKIGYPVFVKPNSGGSSVATNLVKDGDGIKEAVELALKYDKEVMIENYTKGEEIT) lines the ATP pocket. Mg(2+) contacts are provided by aspartate 248, glutamate 260, and asparagine 262.

This sequence belongs to the D-alanine--D-alanine ligase family. Mg(2+) serves as cofactor. Mn(2+) is required as a cofactor.

It is found in the cytoplasm. The catalysed reaction is 2 D-alanine + ATP = D-alanyl-D-alanine + ADP + phosphate + H(+). Its pathway is cell wall biogenesis; peptidoglycan biosynthesis. Its function is as follows. Cell wall formation. The protein is D-alanine--D-alanine ligase of Clostridium botulinum (strain 657 / Type Ba4).